The chain runs to 270 residues: Ribosomal RNA small subunit methyltransferase A (270 aa).

6 residues coordinate S-adenosyl-L-methionine: Asn18, Leu20, Gly45, Glu66, Asp91, and Asn112.

Belongs to the class I-like SAM-binding methyltransferase superfamily. rRNA adenine N(6)-methyltransferase family. RsmA subfamily.

It localises to the cytoplasm. It carries out the reaction adenosine(1518)/adenosine(1519) in 16S rRNA + 4 S-adenosyl-L-methionine = N(6)-dimethyladenosine(1518)/N(6)-dimethyladenosine(1519) in 16S rRNA + 4 S-adenosyl-L-homocysteine + 4 H(+). Specifically dimethylates two adjacent adenosines (A1518 and A1519) in the loop of a conserved hairpin near the 3'-end of 16S rRNA in the 30S particle. May play a critical role in biogenesis of 30S subunits. The polypeptide is Ribosomal RNA small subunit methyltransferase A (Shewanella piezotolerans (strain WP3 / JCM 13877)).